The chain runs to 412 residues: NAD-dependent dihydropyrimidine dehydrogenase subunit PreT (412 aa).

Glu-286 contacts NAD(+).

This sequence belongs to the NADH dehydrogenase family. Heterotetramer of 2 PreA and 2 PreT subunits.

It catalyses the reaction 5,6-dihydrouracil + NAD(+) = uracil + NADH + H(+). The catalysed reaction is 5,6-dihydrothymine + NAD(+) = thymine + NADH + H(+). Functionally, involved in pyrimidine base degradation. Catalyzes physiologically the reduction of uracil to 5,6-dihydrouracil (DHU) by using NADH as a specific cosubstrate. It also catalyzes the reverse reaction and the reduction of thymine to 5,6-dihydrothymine (DHT). This Escherichia coli (strain K12) protein is NAD-dependent dihydropyrimidine dehydrogenase subunit PreT (preT).